Here is a 338-residue protein sequence, read N- to C-terminus: UDP-glucose 4-epimerase (338 aa).

Residues 11–12, 31–36, 58–59, 80–84, Asn99, Ser124, Tyr149, Lys153, and Phe178 contribute to the NAD(+) site; these read YI, DNLCNS, DI, and FAGLK. Substrate contacts are provided by Ser124 and Tyr149. Catalysis depends on Tyr149, which acts as the Proton acceptor. Substrate is bound by residues Asn179, 199-200, 216-218, Arg231, 292-295, and Tyr299; these read NL, AVF, and RDGD.

Belongs to the NAD(P)-dependent epimerase/dehydratase family. In terms of assembly, homodimer. It depends on NAD(+) as a cofactor.

The catalysed reaction is UDP-alpha-D-glucose = UDP-alpha-D-galactose. Its pathway is carbohydrate metabolism; galactose metabolism. Involved in the metabolism of galactose. Catalyzes the conversion of UDP-galactose (UDP-Gal) to UDP-glucose (UDP-Glc) through a mechanism involving the transient reduction of NAD. This Salmonella typhi protein is UDP-glucose 4-epimerase (galE).